Reading from the N-terminus, the 1132-residue chain is MELFQAKDHYILQQGERALWCSRRDGGLQLRPATDLLLAWNPICLGLVEGVIGKIQLHSDLPWWLILIRQKALVGKLPGDHEVCKVTKIAVLSLSEMEPQELELELCKKHHFGINKPEKIIPSPDDSKFLLKTFTNIKSNVSAPNKKKVKESKEKEKLERRLLEELLKMFMDSESFYYSLTYDLTNSVQRQSTGERDGRPLWQKVDDRFFWNKYMIQALTEIGTPDVDFWIIPIIQGFVQIEELVVNYNESSDDDKSSPETPPQDSTCVDDIHPRFLVALISRRSRHRAGMRYKRRGVDKNGNVANYVETEQLIHVHHHTLSFIQTRGSVPVFWSQVGYRYNPRPRLDKSEKETVDCFCAHFEEQLKIYKKQVIVNLVDQAGREKIIGDAYLKQVLLFNNPKLTYVSFDFHEHCRGMKFENVQTLTDAIHDIIIDMKWCWVDQAGVICKQEGIFRVNCMDCLDRTNVVQAAIARVVMEQQLKKLGVMPPEQPLPVKCNRTYQIMWANNGDSISRQYAGTAALKGDFTRTGERKLAGVMKDGVNSANRYYLSRFKDAYRQAVIDLMQGVPVTEDLYSIFTKEKEHEALHKESQRSHQELISQLLQSYMQLLLPGDEKFHGGWALVDCDPSLTDAAHRDVEVLLLLSNAAYYVAYYDDEVDKVNQYQRLGLEDLERIEIGPEPTLFGKPKFSCMRLHYRCKEAGGYFHTLRAVPRSPEEDGKDTLQCIAEMLQITKQAMGLDVPIIEKKLERKSSKPHEDIIGIRSQNQGSLAQGKSFLMSKFSSLNQKVKQTKSNVNIGNLRKLGNFTKPEMKVNFLKPNLKVNLWKSDSSLETMENPGVMGNKVQGESDGDISSDNDSYHSDEFLTNSKSEEDKQLANSLESVGPIDYILPSCGIIVSAPRLGSRSQSASSIDVSTHAPSEAAAGPGSELGKGLESPLKKSPSADSIHTRTGFTKPMDVYCQRFVQDAQNKMNDLSEIRSVAQKSEEGSHKTNRVSNEETQSEPMGQTPPRPSQLNVSCSVAGPPFLSVEPVHSVLSQKTPSSGSSLLELEAGLCVTPSSESSSSRAVSPFAKIRSSMVQVANITQAGLTHGINLAVAKVQKSPAEPEAVNEIQQNELKNMFTQCQTRIIQI.

Positions 167 to 518 (LKMFMDSESF…GDSISRQYAG (352 aa)) constitute an SAC domain. Residues 250-269 (ESSDDDKSSPETPPQDSTCV) are disordered. Positions 593-760 (RSHQELISQL…KSSKPHEDII (168 aa)) constitute a hSac2 domain. Residues serine 714, serine 827, and serine 830 each carry the phosphoserine modification. Residues 833-872 (TMENPGVMGNKVQGESDGDISSDNDSYHSDEFLTNSKSEE) are disordered. Basic and acidic residues predominate over residues 857 to 872 (DSYHSDEFLTNSKSEE). A phosphoserine mark is found at serine 879, serine 882, serine 908, and serine 911. 2 stretches are compositionally biased toward polar residues: residues 908–918 (SASSIDVSTHA) and 994–1005 (RVSNEETQSEPM). 2 disordered regions span residues 908–951 (SASS…HTRT) and 981–1016 (VAQKSEEGSHKTNRVSNEETQSEPMGQTPPRPSQLN). Serine 1103 carries the post-translational modification Phosphoserine.

Homodimer. Interacts with OCRL and RAB5. Interacts with INPP5B and INPP4A. Interacts with STAT3; the interaction is independent of STAT3 'Tyr-705' phosphorylation status. In terms of tissue distribution, highly expressed in brain and hypothalamus, expressed in lung and pancreas, and detected at low levels in liver and heart (at protein level).

It is found in the membrane. Its subcellular location is the clathrin-coated pit. It localises to the early endosome. The protein localises to the recycling endosome. It carries out the reaction a myo-inositol phosphate + H2O = myo-inositol + phosphate. Its function is as follows. Inositol 4-phosphatase which mainly acts on phosphatidylinositol 4-phosphate. May be functionally linked to OCRL, which converts phosphatidylinositol 4,5-bisphosphate to phosphatidylinositol, for a sequential dephosphorylation of phosphatidylinositol 4,5-bisphosphate at the 5 and 4 position of inositol, thus playing an important role in the endocytic recycling. Regulator of TF:TFRC and integrins recycling pathway, is also involved in cell migration mechanisms. Modulates AKT/GSK3B pathway by decreasing AKT and GSK3B phosphorylation. Negatively regulates STAT3 signaling pathway through inhibition of STAT3 phosphorylation and translocation to the nucleus. Functionally important modulator of cardiac myocyte size and of the cardiac response to stress. May play a role as negative regulator of axon regeneration after central nervous system injuries. The protein is Phosphatidylinositide phosphatase SAC2 of Mus musculus (Mouse).